A 567-amino-acid chain; its full sequence is Potassium-transporting ATPase potassium-binding subunit (567 aa).

A run of 12 helical transmembrane segments spans residues 11–31, 67–87, 136–156, 179–199, 255–275, 286–306, 333–353, 363–383, 385–405, 422–442, 489–509, and 532–552; these read LYLL…AALL, AAAI…LQRW, GLAV…VALV, LWLL…QGVV, FSNW…VVMF, VVLL…VYLA, FGVL…CGAV, LGGG…GGVG, GLYG…LMIG, LVSV…AIAV, LMLA…VLAL, and LFVV…YIPA.

Belongs to the KdpA family. In terms of assembly, the system is composed of three essential subunits: KdpA, KdpB and KdpC.

Its subcellular location is the cell inner membrane. Part of the high-affinity ATP-driven potassium transport (or Kdp) system, which catalyzes the hydrolysis of ATP coupled with the electrogenic transport of potassium into the cytoplasm. This subunit binds the periplasmic potassium ions and delivers the ions to the membrane domain of KdpB through an intramembrane tunnel. In Laribacter hongkongensis (strain HLHK9), this protein is Potassium-transporting ATPase potassium-binding subunit.